Here is a 380-residue protein sequence, read N- to C-terminus: Cytochrome b (380 aa).

4 helical membrane-spanning segments follow: residues 33–53 (FGSL…FLAM), 77–98 (WLIR…FLHV), 113–133 (WNMG…GYVL), and 178–198 (FFAF…VHLL). Heme b is bound by residues H83 and H97. H182 and H196 together coordinate heme b. H201 contacts a ubiquinone. 4 helical membrane passes run 226 to 246 (IKDF…TLFF), 288 to 308 (LGGV…PLLH), 320 to 340 (ITQT…WIGG), and 347 to 367 (FIII…ILMP).

Belongs to the cytochrome b family. As to quaternary structure, the cytochrome bc1 complex contains 11 subunits: 3 respiratory subunits (MT-CYB, CYC1 and UQCRFS1), 2 core proteins (UQCRC1 and UQCRC2) and 6 low-molecular weight proteins (UQCRH/QCR6, UQCRB/QCR7, UQCRQ/QCR8, UQCR10/QCR9, UQCR11/QCR10 and a cleavage product of UQCRFS1). This cytochrome bc1 complex then forms a dimer. Requires heme b as cofactor.

It is found in the mitochondrion inner membrane. Its function is as follows. Component of the ubiquinol-cytochrome c reductase complex (complex III or cytochrome b-c1 complex) that is part of the mitochondrial respiratory chain. The b-c1 complex mediates electron transfer from ubiquinol to cytochrome c. Contributes to the generation of a proton gradient across the mitochondrial membrane that is then used for ATP synthesis. The protein is Cytochrome b (MT-CYB) of Microtus guentheri (Gunther's vole).